A 90-amino-acid polypeptide reads, in one-letter code: Probable Fe(2+)-trafficking protein (90 aa).

The protein belongs to the Fe(2+)-trafficking protein family. In terms of assembly, monomer.

In terms of biological role, could be a mediator in iron transactions between iron acquisition and iron-requiring processes, such as synthesis and/or repair of Fe-S clusters in biosynthetic enzymes. The chain is Probable Fe(2+)-trafficking protein from Yersinia pestis bv. Antiqua (strain Antiqua).